Reading from the N-terminus, the 350-residue chain is Transmembrane protein 185B (350 aa).

The next 7 membrane-spanning stretches (helical) occupy residues 16-36 (LIYA…DGVI), 41-61 (WAVF…ASVG), 81-101 (FKAM…EVLV), 111-131 (FWLL…AACV), 168-188 (WLVV…VVLY), 211-231 (VTMA…EVLL), and 240-260 (MFSY…LMAT).

This sequence belongs to the TMEM185 family.

The protein localises to the membrane. The sequence is that of Transmembrane protein 185B (TMEM185B) from Bos taurus (Bovine).